The chain runs to 247 residues: tRNA uridine(34) hydroxylase (247 aa).

Positions 124 to 218 (TKQNVIVIDT…YLEDTQNKNN (95 aa)) constitute a Rhodanese domain. Cys-178 serves as the catalytic Cysteine persulfide intermediate.

The protein belongs to the TrhO family.

The catalysed reaction is uridine(34) in tRNA + AH2 + O2 = 5-hydroxyuridine(34) in tRNA + A + H2O. Functionally, catalyzes oxygen-dependent 5-hydroxyuridine (ho5U) modification at position 34 in tRNAs. The protein is tRNA uridine(34) hydroxylase of Rickettsia akari (strain Hartford).